The following is a 311-amino-acid chain: Nod factor export ATP-binding protein I (311 aa).

In terms of domain architecture, ABC transporter spans 13–243 (IDLAGVSKSY…QIGCPVIEIY (231 aa)). 45 to 52 (GPNGAGKS) provides a ligand contact to ATP.

This sequence belongs to the ABC transporter superfamily. Lipooligosaccharide exporter (TC 3.A.1.102) family. The complex is composed of two ATP-binding proteins (NodI) and two transmembrane proteins (NodJ).

The protein resides in the cell inner membrane. Part of the ABC transporter complex NodIJ involved in the export of the nodulation factors (Nod factors), the bacterial signal molecules that induce symbiosis and subsequent nodulation induction. Nod factors are LCO (lipo-chitin oligosaccharide), a modified beta-1,4-linked N-acetylglucosamine oligosaccharide. This subunit is responsible for energy coupling to the transport system. In Rhizobium johnstonii (strain DSM 114642 / LMG 32736 / 3841) (Rhizobium leguminosarum bv. viciae), this protein is Nod factor export ATP-binding protein I.